The chain runs to 344 residues: 4-dimethylallyltryptophan N-methyltransferase easF (344 aa).

Belongs to the methyltransferase superfamily. Homodimer.

The catalysed reaction is 4-(3-methylbut-2-enyl)-L-tryptophan + S-adenosyl-L-methionine = 4-(3-methylbut-2-enyl)-L-abrine + S-adenosyl-L-homocysteine + H(+). Its pathway is alkaloid biosynthesis; ergot alkaloid biosynthesis. Functionally, 4-dimethylallyltryptophan N-methyltransferase; part of the gene cluster that mediates the biosynthesis of fungal ergot alkaloid. DmaW catalyzes the first step of ergot alkaloid biosynthesis by condensing dimethylallyl diphosphate (DMAP) and tryptophan to form 4-dimethylallyl-L-tryptophan. The second step is catalyzed by the methyltransferase easF that methylates 4-dimethylallyl-L-tryptophan in the presence of S-adenosyl-L-methionine, resulting in the formation of 4-dimethylallyl-L-abrine. The catalase easC and the FAD-dependent oxidoreductase easE then transform 4-dimethylallyl-L-abrine to chanoclavine-I which is further oxidized by easD in the presence of NAD(+), resulting in the formation of chanoclavine-I aldehyde. Agroclavine dehydrogenase easG then mediates the conversion of chanoclavine-I aldehyde to agroclavine via a non-enzymatic adduct reaction: the substrate is an iminium intermediate that is formed spontaneously from chanoclavine-I aldehyde in the presence of glutathione. The presence of easA is not required to complete this reaction. Further conversion of agroclavine to paspalic acid is a two-step process involving oxidation of agroclavine to elymoclavine and of elymoclavine to paspalic acid, the second step being performed by the elymoclavine oxidase cloA. Paspalic acid is then further converted to D-lysergic acid. Ergopeptines are assembled from D-lysergic acid and three different amino acids by the D-lysergyl-peptide-synthetases composed each of a monomudular and a trimodular nonribosomal peptide synthetase subunit. LpsB and lpsC encode the monomodular subunits responsible for D-lysergic acid activation and incorporation into the ergopeptine backbone. LpsA1 and A2 subunits encode the trimodular nonribosomal peptide synthetase assembling the tripeptide portion of ergopeptines. LpsA1 is responsible for formation of the major ergopeptine, ergotamine, and lpsA2 for alpha-ergocryptine, the minor ergopeptine of the total alkaloid mixture elaborated by C.purpurea. D-lysergyl-tripeptides are assembled by the nonribosomal peptide synthetases and released as N-(D-lysergyl-aminoacyl)-lactams. Cyclolization of the D-lysergyl-tripeptides is performed by the Fe(2+)/2-ketoglutarate-dependent dioxygenase easH which introduces a hydroxyl group into N-(D-lysergyl-aminoacyl)-lactam at alpha-C of the aminoacyl residue followed by spontaneous condensation with the terminal lactam carbonyl group. The sequence is that of 4-dimethylallyltryptophan N-methyltransferase easF from Claviceps purpurea (strain 20.1) (Ergot fungus).